A 495-amino-acid polypeptide reads, in one-letter code: Lysine--tRNA ligase (495 aa).

The Mg(2+) site is built by Glu406 and Glu413.

This sequence belongs to the class-II aminoacyl-tRNA synthetase family. As to quaternary structure, homodimer. The cofactor is Mg(2+).

It localises to the cytoplasm. The catalysed reaction is tRNA(Lys) + L-lysine + ATP = L-lysyl-tRNA(Lys) + AMP + diphosphate. The polypeptide is Lysine--tRNA ligase (Staphylococcus aureus (strain MW2)).